A 544-amino-acid chain; its full sequence is Chaperonin GroEL (544 aa).

Residues 29–32 (TMGP), Lys-50, 86–90 (DGTTT), Gly-414, 477–479 (NAA), and Asp-493 contribute to the ATP site. Residues 525–544 (DKPAMPSMPDMGGMGMPGMM) are disordered.

It belongs to the chaperonin (HSP60) family. In terms of assembly, forms a cylinder of 14 subunits composed of two heptameric rings stacked back-to-back. Interacts with the co-chaperonin GroES.

It is found in the cytoplasm. The enzyme catalyses ATP + H2O + a folded polypeptide = ADP + phosphate + an unfolded polypeptide.. Together with its co-chaperonin GroES, plays an essential role in assisting protein folding. The GroEL-GroES system forms a nano-cage that allows encapsulation of the non-native substrate proteins and provides a physical environment optimized to promote and accelerate protein folding. This is Chaperonin GroEL from Aliarcobacter butzleri (strain RM4018) (Arcobacter butzleri).